The chain runs to 119 residues: T cell receptor alpha variable 29/delta variable 5 (119 aa).

The first 21 residues, 1–21, serve as a signal peptide directing secretion; the sequence is MAMLLGASVLILWLQPDWVNS. The region spanning 22-119 is the Ig-like domain; it reads QQKNDDQQVK…DSAVYFCAAS (98 aa). Cys-49 and Cys-116 are disulfide-bonded. An N-linked (GlcNAc...) asparagine glycan is attached at Asn-93.

In terms of assembly, alpha-beta TR is a heterodimer composed of an alpha and beta chain; disulfide-linked. The alpha-beta TR is associated with the transmembrane signaling CD3 coreceptor proteins to form the TR-CD3 (TcR or TCR). The assembly of alpha-beta TR heterodimers with CD3 occurs in the endoplasmic reticulum where a single alpha-beta TR heterodimer associates with one CD3D-CD3E heterodimer, one CD3G-CD3E heterodimer and one CD247 homodimer forming a stable octameric structure. CD3D-CD3E and CD3G-CD3E heterodimers preferentially associate with TR alpha and TR beta chains, respectively. The association of the CD247 homodimer is the last step of TcR assembly in the endoplasmic reticulum and is required for transport to the cell surface.

Its subcellular location is the cell membrane. Functionally, v region of the variable domain of T cell receptor (TR) alpha chain that participates in the antigen recognition. Alpha-beta T cell receptors are antigen specific receptors which are essential to the immune response and are present on the cell surface of T lymphocytes. Recognize peptide-major histocompatibility (MH) (pMH) complexes that are displayed by antigen presenting cells (APC), a prerequisite for efficient T cell adaptive immunity against pathogens. Binding of alpha-beta TR to pMH complex initiates TR-CD3 clustering on the cell surface and intracellular activation of LCK that phosphorylates the ITAM motifs of CD3G, CD3D, CD3E and CD247 enabling the recruitment of ZAP70. In turn ZAP70 phosphorylates LAT, which recruits numerous signaling molecules to form the LAT signalosome. The LAT signalosome propagates signal branching to three major signaling pathways, the calcium, the mitogen-activated protein kinase (MAPK) kinase and the nuclear factor NF-kappa-B (NF-kB) pathways, leading to the mobilization of transcription factors that are critical for gene expression and essential for T cell growth and differentiation. The T cell repertoire is generated in the thymus, by V-(D)-J rearrangement. This repertoire is then shaped by intrathymic selection events to generate a peripheral T cell pool of self-MH restricted, non-autoaggressive T cells. Post-thymic interaction of alpha-beta TR with the pMH complexes shapes TR structural and functional avidity. The protein is T cell receptor alpha variable 29/delta variable 5 of Homo sapiens (Human).